We begin with the raw amino-acid sequence, 92 residues long: UPF0223 protein Sez_0908 (92 aa).

Belongs to the UPF0223 family.

The chain is UPF0223 protein Sez_0908 from Streptococcus equi subsp. zooepidemicus (strain MGCS10565).